Here is a 489-residue protein sequence, read N- to C-terminus: UBX domain-containing protein 7 (489 aa).

Position 2 is an N-acetylalanine (A2). A UBA domain is found at 2–54 (AAHGGSAASSALKGLIQQFTTITGASESVGKHMLEACNNNLEMAVTMFLDGGG). A disordered region spans residues 56 to 77 (AEEPSTSSASVSTVRPHTEEEV). A compositionally biased stretch (polar residues) spans 59–70 (PSTSSASVSTVR). Residue K84 forms a Glycyl lysine isopeptide (Lys-Gly) (interchain with G-Cter in SUMO2) linkage. K99 is covalently cross-linked (Glycyl lysine isopeptide (Lys-Gly) (interchain with G-Cter in ubiquitin)). Residue K134 forms a Glycyl lysine isopeptide (Lys-Gly) (interchain with G-Cter in SUMO2) linkage. S278, S280, S285, and S288 each carry phosphoserine. The region spanning 285–304 (SEDSQLEAAIRASLQETHFD) is the UIM domain. The segment covering 300–309 (ETHFDSTQTK) has biased composition (polar residues). The segment at 300-384 (ETHFDSTQTK…PGTATNHQGL (85 aa)) is disordered. T306 bears the Phosphothreonine mark. The segment covering 352 to 366 (HKDLGHRKEENRRPL) has biased composition (basic and acidic residues). Residues 408 to 485 (VNGPKAQLML…GLCPQETVFV (78 aa)) enclose the UBX domain.

As to quaternary structure, interacts with neddylated CUL2, ubiquitinated HIF1A, and VCP/p97.

It is found in the nucleus. In terms of biological role, ubiquitin-binding adapter that links a subset of NEDD8-associated cullin ring ligases (CRLs) to the segregase VCP/p97, to regulate turnover of their ubiquitination substrates. In Homo sapiens (Human), this protein is UBX domain-containing protein 7 (UBXN7).